Reading from the N-terminus, the 352-residue chain is Palmitoyltransferase PFA5 (352 aa).

2 helical membrane passes run 12–32 (YWTI…GTWA) and 53–73 (IGLI…WVLI). Residues 114 to 164 (VWCSNCQSLKVGRTKHSSHQGHCVPRFDHYCVWLGAVIGFKNYRLFVQFVF) enclose the DHHC domain. The active-site S-palmitoyl cysteine intermediate is the Cys-144. A run of 2 helical transmembrane segments spans residues 159–179 (FVQF…TISV) and 195–215 (LIVL…LFVS).

The protein belongs to the DHHC palmitoyltransferase family. PFA5 subfamily.

The protein resides in the membrane. The enzyme catalyses L-cysteinyl-[protein] + hexadecanoyl-CoA = S-hexadecanoyl-L-cysteinyl-[protein] + CoA. In Candida glabrata (strain ATCC 2001 / BCRC 20586 / JCM 3761 / NBRC 0622 / NRRL Y-65 / CBS 138) (Yeast), this protein is Palmitoyltransferase PFA5 (PFA5).